A 260-amino-acid chain; its full sequence is Large ribosomal subunit protein uL2 (260 aa).

Residues 208 to 230 form a disordered region; sequence EHPHGGGNHQHIGHPSTVRRDAS.

Belongs to the universal ribosomal protein uL2 family.

It is found in the cytoplasm. The polypeptide is Large ribosomal subunit protein uL2 (Caenorhabditis elegans).